A 175-amino-acid polypeptide reads, in one-letter code: MGKSLADKQELVAEIKDLLKDAQLTFVIDYKGLTVAEITDLRNRLRPAGAYCKIAKNTLMHIAVDGDETWQPVQSLLKDSSAFLIAGEDVASAVKAYKEFRKATKKTELRGGVMEGQALTSDQIEALGDLPTKDQLYGQIAGAINAVTAKIAIGINEVPGSLARAIKAVSEKEAA.

Belongs to the universal ribosomal protein uL10 family. Part of the ribosomal stalk of the 50S ribosomal subunit. The N-terminus interacts with L11 and the large rRNA to form the base of the stalk. The C-terminus forms an elongated spine to which L12 dimers bind in a sequential fashion forming a multimeric L10(L12)X complex.

Forms part of the ribosomal stalk, playing a central role in the interaction of the ribosome with GTP-bound translation factors. In Picosynechococcus sp. (strain ATCC 27264 / PCC 7002 / PR-6) (Agmenellum quadruplicatum), this protein is Large ribosomal subunit protein uL10.